Consider the following 107-residue polypeptide: IQ domain-containing protein F6 (107 aa).

One can recognise an IQ domain in the interval 42 to 71 (QEWAVVKVQAQVRMWQARRRFLQARQAACI).

The polypeptide is IQ domain-containing protein F6 (IQCF6) (Homo sapiens (Human)).